The sequence spans 1477 residues: Oligomycin resistance ATP-dependent permease YOR1 (1477 aa).

The segment at 1–48 is disordered; that stretch reads MTITVGDAVSETELENKSQNVVLSPKASASSDISTDVDKDTSSSWDDK. Residues 1-206 are Cytoplasmic-facing; sequence MTITVGDAVS…RALLFTFKKQ (206 aa). Phosphoserine is present on residues serine 10 and serine 24. The segment covering 36–48 has biased composition (basic and acidic residues); it reads DVDKDTSSSWDDK. Position 53 is a phosphothreonine (threonine 53). The Diacidic ER export motif DxE signature appears at 71-73; that stretch reads DIE. Residues 207–227 traverse the membrane as a helical segment; sequence YFMSIVFAILANCTSGFNPMI. An ABC transmembrane type-1 1 domain is found at 207 to 493; the sequence is YFMSIVFAIL…LPIAIGTGID (287 aa). Over 228–249 the chain is Extracellular; sequence TKRLIEFVEEKAIFHSMHVNKG. Residues 250-270 traverse the membrane as a helical segment; it reads IGYAIGACLMMFVNGLTFNHF. Topologically, residues 271-328 are cytoplasmic; the sequence is FHTSQLTGVQAKSILTKAAMKKMFNASNYARHCFPNGKVTSFVTTDLARIEFALSFQP. Residues 329–349 form a helical membrane-spanning segment; sequence FLAGFPAILAICIVLLIVNLG. Topologically, residues 350-357 are extracellular; it reads PIALVGIG. The chain crosses the membrane as a helical span at residues 358 to 370; that stretch reads IFFGGFFISLFAF. Topologically, residues 371–433 are cytoplasmic; the sequence is KLILGFRIAA…KVRKMQLSRN (63 aa). The helical transmembrane segment at 434–454 threads the bilayer; that stretch reads FLIAMAMSLPSIASLVTFLAM. Residues 455–478 lie on the Extracellular side of the membrane; it reads YKVNKGGRQPGNIFASLSLFQVLS. Residues 479–499 traverse the membrane as a helical segment; the sequence is LQMFFLPIAIGTGIDMIIGLG. Topologically, residues 500 to 615 are cytoplasmic; the sequence is RLQSLLEAPE…DLNFDIKKGE (116 aa). The tract at residues 552–595 is disordered; that stretch reads KGEAKDEGKKNKKKRKDTWGKPSASTNKAKRLDNMLKDRDGPED. Residues 581 to 595 are compositionally biased toward basic and acidic residues; the sequence is KRLDNMLKDRDGPED. The ABC transporter 1 domain occupies 581-808; sequence KRLDNMLKDR…NQTLINLLQF (228 aa). A helical transmembrane segment spans residues 616–636; that stretch reads FIMITGPIGTGKSSLLNAMAG. ATP is bound at residue 621-628; sequence GPIGTGKS. Residues 637–892 are Extracellular-facing; sequence SMRKTDGKVE…EYIKAAVGKW (256 aa). N-linked (GlcNAc...) asparagine glycans are attached at residues asparagine 661, asparagine 759, and asparagine 799. The chain crosses the membrane as a helical span at residues 893 to 913; sequence GFIALPLYAILVVGTTFCSLF. One can recognise an ABC transmembrane type-1 2 domain in the interval 897 to 1175; it reads LPLYAILVVG…ILRAMTQTEN (279 aa). The Cytoplasmic segment spans residues 914–940; sequence SSVWLSYWTENKFKNRPPSFYMGLYSF. The helical transmembrane segment at 941-961 threads the bilayer; sequence FVFAAFIFMNGQFTILCAMGI. The Extracellular portion of the chain corresponds to 962–1027; it reads MASKWLNLRA…ANIVGVCVMC (66 aa). A helical transmembrane segment spans residues 1028-1048; sequence IVYLPWFAIAIPFLLVIFVLI. The Cytoplasmic segment spans residues 1049–1117; that stretch reads ADHYQSSGRE…GYLVVVLQRW (69 aa). A helical membrane pass occupies residues 1118-1138; sequence VGIFLDMVAIAFALIITLLCV. Over 1139-1141 the chain is Extracellular; it reads TRA. The helical transmembrane segment at 1142 to 1162 threads the bilayer; it reads FPISAASVGVLLTYVLQLPGL. Residues 1163–1477 are Cytoplasmic-facing; sequence LNTILRAMTQ…IVENDFENRS (315 aa). An ABC transporter 2 domain is found at 1213–1464; that stretch reads IIFENVDFAY…EDSIFRSMCS (252 aa). 1247–1254 contributes to the ATP binding site; the sequence is GRTGAGKS.

The protein belongs to the ABC transporter superfamily. ABCC family. Conjugate transporter (TC 3.A.1.208) subfamily.

The protein localises to the cell membrane. The enzyme catalyses a 1,2-diacyl-sn-glycero-3-phosphoethanolamine(in) + ATP + H2O = a 1,2-diacyl-sn-glycero-3-phosphoethanolamine(out) + ADP + phosphate + H(+). It carries out the reaction Cd(2+)(in) + ATP + H2O = Cd(2+)(out) + ADP + phosphate + H(+). The catalysed reaction is an S-substituted glutathione(in) + ATP + H2O = an S-substituted glutathione(out) + ADP + phosphate + H(+). Its function is as follows. Functions as a pleiotropic drug pump at the plasma membrane to clear toxic substances from the cytosol. Organic anion transporter involved in the detoxification of a wide range of toxic environmental organic anions that contain carboxyl groups. Required for tolerance to reveromycin A, tautomycin and leptomycin B. Required for oligomycin resistance. Required for rhodamine B resistance. Mediates the ATP-dependent efflux of rhodamine B. Involved in cadmium detoxification. Displays an energy-dependent efflux of cadmium and glutathione, suggesting that YOR1 transports both compounds as a bis-glutathionato-cadmium Cd-(GS)(2) complex. Confers resistance to rhodamine 6G and to doxorubicin. This chain is Oligomycin resistance ATP-dependent permease YOR1, found in Saccharomyces cerevisiae (strain ATCC 204508 / S288c) (Baker's yeast).